Consider the following 1001-residue polypeptide: Serine/threonine-protein kinase TAO1 (1001 aa).

Ser-9 carries the phosphoserine modification. The Protein kinase domain occupies 28–281 (FTDLREIGHG…SEELLKHMFV (254 aa)). ATP contacts are provided by residues 34 to 42 (IGHGSFGAV) and Lys-57. The active-site Proton acceptor is the Asp-151. Disordered regions lie at residues 324–380 (PAVE…DKSE) and 404–433 (ENYQEEGDPRTRASDPQSPPQVSRHKSHYR). Low complexity predominate over residues 350 to 370 (SNQSIPSMSISASSQSSSVNS). 2 positions are modified to phosphoserine: Ser-421 and Ser-445. Residues 458–651 (SELREQMSGY…QTQKDLEHAM (194 aa)) are a coiled coil. Residues 567–587 (KEELNENQSTPKKEKQEWLSK) are disordered. Positions 577–587 (PKKEKQEWLSK) are enriched in basic and acidic residues. A Phosphothreonine modification is found at Thr-669. Residues 754–877 (KAVLKRLKEE…LERQAREIEA (124 aa)) adopt a coiled-coil conformation. Residues 905 to 1001 (PGASSWSHNP…ISNGSHMSYT (97 aa)) are disordered. Over residues 921-930 (HWGHPMGGTP) the composition is skewed to low complexity. Residue Ser-965 is modified to Phosphoserine. Residues 975–1001 (GGRTEQGMSRSTSVTSQISNGSHMSYT) are compositionally biased toward polar residues.

The protein belongs to the protein kinase superfamily. STE Ser/Thr protein kinase family. STE20 subfamily. In terms of assembly, self-associates. Interacts with MAP2K3. Interacts with SPRED1. Interacts with TESK1; the interaction inhibits TAOK1 kinase activity. Interacts with MAP3K7. Proteolytically processed by caspase-3 (CASP3). Post-translationally, autophosphorylated. Phosphorylated by ATM in response to DNA damage. Phosphorylated by LRRK2.

The protein localises to the cytoplasm. The enzyme catalyses L-seryl-[protein] + ATP = O-phospho-L-seryl-[protein] + ADP + H(+). The catalysed reaction is L-threonyl-[protein] + ATP = O-phospho-L-threonyl-[protein] + ADP + H(+). Its activity is regulated as follows. Serine/threonine-protein kinase activity is inhibited by SPRED1. Functionally, serine/threonine-protein kinase involved in various processes such as p38/MAPK14 stress-activated MAPK cascade, DNA damage response and regulation of cytoskeleton stability. Phosphorylates MAP2K3, MAP2K6 and MARK2. Acts as an activator of the p38/MAPK14 stress-activated MAPK cascade by mediating phosphorylation and subsequent activation of the upstream MAP2K3 and MAP2K6 kinases. Involved in G-protein coupled receptor signaling to p38/MAPK14. In response to DNA damage, involved in the G2/M transition DNA damage checkpoint by activating the p38/MAPK14 stress-activated MAPK cascade, probably by mediating phosphorylation of MAP2K3 and MAP2K6. Acts as a regulator of cytoskeleton stability by phosphorylating 'Thr-208' of MARK2, leading to activate MARK2 kinase activity and subsequent phosphorylation and detachment of MAPT/TAU from microtubules. Also acts as a regulator of apoptosis: regulates apoptotic morphological changes, including cell contraction, membrane blebbing and apoptotic bodies formation via activation of the MAPK8/JNK cascade. During fetal development, it plays an essential role in the regulation of neuronal differentiation and migration to the cortical plate. The protein is Serine/threonine-protein kinase TAO1 (Taok1) of Mus musculus (Mouse).